A 213-amino-acid polypeptide reads, in one-letter code: Putative manganese efflux pump MntP (213 aa).

A run of 6 helical transmembrane segments spans residues 3–23 (ILSI…VSVA), 36–56 (ALKV…IGWG), 67–87 (AFDH…MIFE), 130–150 (LAIA…FLGI), 152–172 (IVQT…LGVI), and 187–207 (IVGG…HTGI).

Belongs to the MntP (TC 9.B.29) family.

Its subcellular location is the cell membrane. In terms of biological role, probably functions as a manganese efflux pump. This is Putative manganese efflux pump MntP from Clostridium perfringens (strain ATCC 13124 / DSM 756 / JCM 1290 / NCIMB 6125 / NCTC 8237 / Type A).